The chain runs to 565 residues: Protein priB (565 aa).

Positions 20-50 form a DNA-binding region, zn(2)-C6 fungal-type; it reads CTTCRAAKMKCVGAEDGQRQCQRCKRANVQC. 2 disordered regions span residues 82-170 and 195-224; these read AKSK…SDRA and NPEDAPASGPSSVRCSETYSPPQSPAAPAG. Over residues 90–111 the composition is skewed to basic and acidic residues; sequence DARHSSSYRDSHPSLGEPDDRY. Positions 129–155 are enriched in low complexity; that stretch reads SNLPPLNLPSYPDAASEYTASSTSSRT. Positions 203–215 are enriched in polar residues; sequence GPSSVRCSETYSP.

It is found in the nucleus. In Lentinula edodes (Shiitake mushroom), this protein is Protein priB (priB).